The following is a 30-amino-acid chain: Phospholipase A2 acanmyotoxin-2 (30 aa).

The Ca(2+) site is built by Tyr-28 and Gly-30.

Requires Ca(2+) as cofactor. Contains seven disulfide bonds. In terms of tissue distribution, expressed by the venom gland.

It localises to the secreted. The catalysed reaction is a 1,2-diacyl-sn-glycero-3-phosphocholine + H2O = a 1-acyl-sn-glycero-3-phosphocholine + a fatty acid + H(+). Functionally, snake venom phospholipase A2 (PLA2) that has myotoxic activity but no significant neurotoxicity. PLA2 catalyzes the calcium-dependent hydrolysis of the 2-acyl groups in 3-sn-phosphoglycerides. This Acanthophis sp. (strain Seram) (Seram death adder) protein is Phospholipase A2 acanmyotoxin-2.